Consider the following 160-residue polypeptide: GPI-anchored protein LLG3 (160 aa).

The signal sequence occupies residues 1-23 (MKITHHCLVSLLSILLLSGFAFS). Asparagine 56 carries an N-linked (GlcNAc...) asparagine glycan. Residue serine 137 is the site of GPI-anchor amidated serine attachment. The propeptide at 138 to 160 (HASIPLVSTHVLLITVSILFHLF) is removed in mature form.

In terms of tissue distribution, expressed in pollen, pollen tubes, sporophytic pistil tissues, in the early stages of female gametophyte development, and in unfertilized, mature ovules.

Its subcellular location is the cell membrane. In Arabidopsis thaliana (Mouse-ear cress), this protein is GPI-anchored protein LLG3.